The chain runs to 430 residues: Adenylosuccinate synthetase (430 aa).

Residues 13–19 and 41–43 each bind GTP; these read GDEGKGK and GHT. Residue D14 is the Proton acceptor of the active site. Positions 14 and 41 each coordinate Mg(2+). IMP-binding positions include 14-17, 39-42, T130, R144, Q225, T240, and R304; these read DEGK and NAGH. The active-site Proton donor is H42. 300–306 serves as a coordination point for substrate; it reads STTGRAR. GTP-binding positions include R306, 332 to 334, and 414 to 416; these read KLD and STG.

This sequence belongs to the adenylosuccinate synthetase family. Homodimer. Mg(2+) is required as a cofactor.

Its subcellular location is the cytoplasm. It catalyses the reaction IMP + L-aspartate + GTP = N(6)-(1,2-dicarboxyethyl)-AMP + GDP + phosphate + 2 H(+). It participates in purine metabolism; AMP biosynthesis via de novo pathway; AMP from IMP: step 1/2. Its function is as follows. Plays an important role in the de novo pathway of purine nucleotide biosynthesis. Catalyzes the first committed step in the biosynthesis of AMP from IMP. This is Adenylosuccinate synthetase from Alcanivorax borkumensis (strain ATCC 700651 / DSM 11573 / NCIMB 13689 / SK2).